The primary structure comprises 393 residues: Digeranylgeranylglycerophospholipid reductase (393 aa).

FAD is bound by residues Ala14, Asp33, Cys44, Ala45, Gly47, Arg100, Ala124, Asp280, Gly292, and Ile293.

It belongs to the geranylgeranyl reductase family. DGGGPL reductase subfamily. It depends on FAD as a cofactor.

The catalysed reaction is a 2,3-bis-O-phytanyl-sn-glycerol 1-phospholipid + 8 A = a 2,3-bis-O-(geranylgeranyl)-sn-glycerol 1-phospholipid + 8 AH2. It carries out the reaction 2,3-bis-O-(phytanyl)-sn-glycerol 1-phosphate + 8 A = 2,3-bis-O-(geranylgeranyl)-sn-glycerol 1-phosphate + 8 AH2. It catalyses the reaction CDP-2,3-bis-O-(geranylgeranyl)-sn-glycerol + 8 AH2 = CDP-2,3-bis-O-(phytanyl)-sn-glycerol + 8 A. The enzyme catalyses archaetidylserine + 8 AH2 = 2,3-bis-O-phytanyl-sn-glycero-3-phospho-L-serine + 8 A. Its pathway is membrane lipid metabolism; glycerophospholipid metabolism. Is involved in the reduction of 2,3-digeranylgeranylglycerophospholipids (unsaturated archaeols) into 2,3-diphytanylglycerophospholipids (saturated archaeols) in the biosynthesis of archaeal membrane lipids. Catalyzes the formation of archaetidic acid (2,3-di-O-phytanyl-sn-glyceryl phosphate) from 2,3-di-O-geranylgeranylglyceryl phosphate (DGGGP) via the hydrogenation of each double bond of the isoprenoid chains. Is also probably able to reduce double bonds of geranyl groups in CDP-2,3-bis-O-(geranylgeranyl)-sn-glycerol and archaetidylserine, thus acting at various stages in the biosynthesis of archaeal membrane lipids. The chain is Digeranylgeranylglycerophospholipid reductase from Methanobrevibacter smithii (strain ATCC 35061 / DSM 861 / OCM 144 / PS).